We begin with the raw amino-acid sequence, 487 residues long: MKYKDLREFLTLLEGQGELVRIKQEIDPYLEMAEISDRTLRKGGPAILFENPKGYRMPVLCNLFGTPKRVALGMGQEDTHALRELGKLLAFLKEPEPPKGFKELIGQLPQWKQVLNMPSKVLGKADCQQVVLSGDEVDLHKLPIMHCHQGDVAPLVTWGLTITQGPYKKRQNLGIYRQQLIGKNKLIMRWLSHRGGALDFHEWKEANPDKPFPVSVAIGADPATILAAVTPIPDTLSEYAFAGLLRGQKTEVTKSISNDLEIPASAEIVLEGYIDPNETALEGPYGDHTGYYNEQEYFPVFTVTHITMRRDAIYHSTYTGRPPDEPAVLGEALNEVFIPILQKQFPEIVDFYLPPEGCSYRLAVVTIKKQYAGHAKRVMMGVWSFLRQFMYTKFVIVCDDDVNARDWKDVIWAITTRCDPSRDTTLIDHTPIDYLDFASPIAGLGSKMGIDATNKWPGETSREWGTPIKKDPNVVKLVDEIWDQLGL.

Residue N172 participates in Mn(2+) binding. Prenylated FMN contacts are provided by residues 175–177 (IYR), 189–191 (RWL), and 194–195 (RG). E238 is a binding site for Mn(2+). The active-site Proton donor is the D287.

It belongs to the UbiD family. Homohexamer. It depends on prenylated FMN as a cofactor. Mn(2+) is required as a cofactor.

Its subcellular location is the cell membrane. It catalyses the reaction a 4-hydroxy-3-(all-trans-polyprenyl)benzoate + H(+) = a 2-(all-trans-polyprenyl)phenol + CO2. It participates in cofactor biosynthesis; ubiquinone biosynthesis. Its function is as follows. Catalyzes the decarboxylation of 3-octaprenyl-4-hydroxy benzoate to 2-octaprenylphenol, an intermediate step in ubiquinone biosynthesis. This Actinobacillus pleuropneumoniae serotype 7 (strain AP76) protein is 3-octaprenyl-4-hydroxybenzoate carboxy-lyase.